Reading from the N-terminus, the 415-residue chain is Squalene synthase clz20 (415 aa).

An N-linked (GlcNAc...) asparagine glycan is attached at Asn-114. Residues 395-415 (ADTMYLAVLVLGVFGVVAAIL) traverse the membrane as a helical segment.

It belongs to the phytoene/squalene synthase family. Mg(2+) is required as a cofactor.

Its subcellular location is the membrane. The catalysed reaction is 2 (2E,6E)-farnesyl diphosphate + NADH + H(+) = squalene + 2 diphosphate + NAD(+). It carries out the reaction 2 (2E,6E)-farnesyl diphosphate + NADPH + H(+) = squalene + 2 diphosphate + NADP(+). It functions in the pathway terpene metabolism; lanosterol biosynthesis; lanosterol from farnesyl diphosphate: step 1/3. In terms of biological role, squalene synthase; part of the gene cluster that mediates the biosynthesis of squalestatin S1 (SQS1, also known as zaragozic acid A), a heavily oxidized fungal polyketide that offers potent cholesterol lowering activity by targeting squalene synthase (SS). Catalyzes the condensation of 2 two farnesyl pyrophosphate moieties to form squalene. The presence of a gene encoding a squalene synthase supports the identification of the cluster as being responsible for SQS1 production and suggests a likely mechanism for self-resistance. This is Squalene synthase clz20 from Cochliobolus lunatus (Filamentous fungus).